The primary structure comprises 263 residues: uncharacterized protein (263 aa).

31-38 (GPTGSGKT) provides a ligand contact to ATP.

The protein belongs to the CbbQ/NirQ/NorQ/GpvN family.

This is an uncharacterized protein from Staphylococcus epidermidis (strain ATCC 35984 / DSM 28319 / BCRC 17069 / CCUG 31568 / BM 3577 / RP62A).